A 314-amino-acid polypeptide reads, in one-letter code: Ribosomal protein uL3 glutamine methyltransferase (314 aa).

Belongs to the protein N5-glutamine methyltransferase family. PrmB subfamily.

It carries out the reaction L-glutaminyl-[ribosomal protein uL3] + S-adenosyl-L-methionine = N(5)-methyl-L-glutaminyl-[ribosomal protein uL3] + S-adenosyl-L-homocysteine + H(+). In terms of biological role, methylates large ribosomal subunit protein uL3 on a specific glutamine residue. In Shewanella oneidensis (strain ATCC 700550 / JCM 31522 / CIP 106686 / LMG 19005 / NCIMB 14063 / MR-1), this protein is Ribosomal protein uL3 glutamine methyltransferase.